A 256-amino-acid polypeptide reads, in one-letter code: Major prion protein (256 aa).

Positions 1-24 (MVKSHIGSWILVLFVAMWSDVGLC) are cleaved as a signal peptide. Residues 25–41 (KKRPKPGGGWNTGGSRY) form an interaction with ADGRG6 region. The segment at 25 to 233 (KKRPKPGGGW…ESEAYYQRRA (209 aa)) is interaction with GRB2, ERI3 and SYN1. A disordered region spans residues 28–110 (PKPGGGWNTG…QWNKPSKPKT (83 aa)). Repeat copies occupy residues 54–62 (PQGGGGWGQ), 63–70 (PHGGGWGQ), 71–78 (PHGGGWGQ), 79–86 (PHGGGWGQ), and 87–95 (PHGGGGWGQ). A 5 X 8 AA tandem repeats of P-H-G-G-G-W-G-Q region spans residues 54 to 95 (PQGGGGWGQPHGGGWGQPHGGGWGQPHGGGWGQPHGGGGWGQ). Residues 55–97 (QGGGGWGQPHGGGWGQPHGGGWGQPHGGGWGQPHGGGGWGQGG) are compositionally biased toward gly residues. Cu(2+)-binding residues include His-64, Gly-65, Gly-66, His-72, Gly-73, Gly-74, His-80, Gly-81, Gly-82, His-88, Gly-90, and Gly-91. Cys-182 and Cys-217 are joined by a disulfide. Residues Asn-184 and Asn-200 are each glycosylated (N-linked (GlcNAc...) asparagine). A lipid anchor (GPI-anchor amidated alanine) is attached at Ala-233. Residues 234–256 (SAILFSSPPVILLISFLIFLIVG) constitute a propeptide, removed in mature form.

It belongs to the prion family. Monomer and homodimer. Has a tendency to aggregate into amyloid fibrils containing a cross-beta spine, formed by a steric zipper of superposed beta-strands. Soluble oligomers may represent an intermediate stage on the path to fibril formation. Copper binding may promote oligomerization. Interacts with GRB2, APP, ERI3/PRNPIP and SYN1. Mislocalized cytosolically exposed PrP interacts with MGRN1; this interaction alters MGRN1 subcellular location and causes lysosomal enlargement. Interacts with APP. Interacts with KIAA1191. Interacts with ADGRG6.

Its subcellular location is the cell membrane. It is found in the golgi apparatus. Its function is as follows. Its primary physiological function is unclear. May play a role in neuronal development and synaptic plasticity. May be required for neuronal myelin sheath maintenance. May promote myelin homeostasis through acting as an agonist for ADGRG6 receptor. May play a role in iron uptake and iron homeostasis. Soluble oligomers are toxic to cultured neuroblastoma cells and induce apoptosis (in vitro). Association with GPC1 (via its heparan sulfate chains) targets PRNP to lipid rafts. Also provides Cu(2+) or Zn(2+) for the ascorbate-mediated GPC1 deaminase degradation of its heparan sulfate side chains. The chain is Major prion protein (PRNP) from Felis catus (Cat).